A 914-amino-acid polypeptide reads, in one-letter code: Serine/threonine-protein kinase MST20 (914 aa).

Positions 1-12 (MDGHSNFTQPSD) are enriched in polar residues. Disordered stretches follow at residues 1 to 140 (MDGH…QLQN), 156 to 184 (NQYSAASHRRSNSYGHPHGPQSSNSLTFN), and 251 to 286 (AMSEKSQQVRGMEAQLPTSKRYSDETKEPKPGVLRK). 3 stretches are compositionally biased toward low complexity: residues 13–26 (TSHASHTIPSSSSS), 63–72 (RSSTSLRRAP), and 79–97 (TPTSTHASNSSSPRNPSSS). Over residues 122-136 (ARDRDSDPARNDHGH) the composition is skewed to basic and acidic residues. The span at 156–166 (NQYSAASHRRS) shows a compositional bias: basic residues. Polar residues predominate over residues 175-184 (PQSSNSLTFN). The segment covering 271-280 (RYSDETKEPK) has biased composition (basic and acidic residues). Residues 306 to 319 (ISAPENPVHVTHVG) form the CRIB domain. The tract at residues 408-615 (SPMISPPASP…RHRSRQSNGL (208 aa)) is disordered. Low complexity-rich tracts occupy residues 516-548 (AYPASQQSPAVQAAYQQQLMQQQQEQALAQAQA) and 562-576 (QPQAQQPTPPQSQHQ). A compositionally biased stretch (polar residues) spans 577-586 (YSRPTDANGA). The span at 587 to 596 (QQTQRPQQPQ) shows a compositional bias: low complexity. The region spanning 634–885 (YRSFTKIGQG…AHDLLRHEFM (252 aa)) is the Protein kinase domain. Residues 640–648 (IGQGASGGV) and Lys-663 each bind ATP. Asp-753 functions as the Proton acceptor in the catalytic mechanism.

It belongs to the protein kinase superfamily. STE Ser/Thr protein kinase family. STE20 subfamily.

Its subcellular location is the cytoplasm. It is found in the nucleus. The catalysed reaction is L-seryl-[protein] + ATP = O-phospho-L-seryl-[protein] + ADP + H(+). The enzyme catalyses L-threonyl-[protein] + ATP = O-phospho-L-threonyl-[protein] + ADP + H(+). In terms of biological role, MAP4K component of the MAPK pathway required for the mating pheromone response and the regulation of cell polarity and cell cycle. Phosphorylates histone H2B to form H2BS10ph. Is involved in conidiation, aerial hyphal growth and infection-related morphogenesis. This chain is Serine/threonine-protein kinase MST20 (MST20), found in Pyricularia oryzae (strain 70-15 / ATCC MYA-4617 / FGSC 8958) (Rice blast fungus).